Consider the following 183-residue polypeptide: ATP synthase subunit delta (183 aa).

Belongs to the ATPase delta chain family. F-type ATPases have 2 components, F(1) - the catalytic core - and F(0) - the membrane proton channel. F(1) has five subunits: alpha(3), beta(3), gamma(1), delta(1), epsilon(1). F(0) has three main subunits: a(1), b(2) and c(10-14). The alpha and beta chains form an alternating ring which encloses part of the gamma chain. F(1) is attached to F(0) by a central stalk formed by the gamma and epsilon chains, while a peripheral stalk is formed by the delta and b chains.

Its subcellular location is the cell inner membrane. In terms of biological role, f(1)F(0) ATP synthase produces ATP from ADP in the presence of a proton or sodium gradient. F-type ATPases consist of two structural domains, F(1) containing the extramembraneous catalytic core and F(0) containing the membrane proton channel, linked together by a central stalk and a peripheral stalk. During catalysis, ATP synthesis in the catalytic domain of F(1) is coupled via a rotary mechanism of the central stalk subunits to proton translocation. Its function is as follows. This protein is part of the stalk that links CF(0) to CF(1). It either transmits conformational changes from CF(0) to CF(1) or is implicated in proton conduction. The chain is ATP synthase subunit delta from Chloroherpeton thalassium (strain ATCC 35110 / GB-78).